The primary structure comprises 368 residues: Tubby-like F-box protein 2 (368 aa).

Residues 1–17 (MVPWRRSSSSSSAPSSR) are compositionally biased toward low complexity. Positions 1–44 (MVPWRRSSSSSSAPSSRPARRPARTNARVSPDVSSELSPLAGEE) are disordered. The F-box domain occupies 49-104 (ERWSALVPDLLADILRCVEAGSERWPPRRDVVACASVCRRWRDVAVAVVQPPLESG).

It belongs to the TUB family. As to expression, expressed in stems, leaves, flowers and seeds.

The polypeptide is Tubby-like F-box protein 2 (TULP2) (Oryza sativa subsp. japonica (Rice)).